Here is a 197-residue protein sequence, read N- to C-terminus: Tyrosine-protein phosphatase-like protein OCA2 (197 aa).

Positions 10-160 (SPVVSTDVSL…FETNLKIPRN (151 aa)) constitute a Tyrosine-protein phosphatase domain. At serine 181 the chain carries Phosphoserine.

It belongs to the protein-tyrosine phosphatase family.

The protein localises to the cytoplasm. Its function is as follows. Required for normal growth in the presence of linoleic acid hydroperoxide (LoaOOH). This chain is Tyrosine-protein phosphatase-like protein OCA2 (OCA2), found in Saccharomyces cerevisiae (strain ATCC 204508 / S288c) (Baker's yeast).